A 309-amino-acid polypeptide reads, in one-letter code: DNA-directed RNA polymerase subunit alpha (309 aa).

The alpha N-terminal domain (alpha-NTD) stretch occupies residues 1–227 (MTFQVECVES…ALFEPLKNVS (227 aa)). An alpha C-terminal domain (alpha-CTD) region spans residues 237–309 (EPTPESQTPI…GIKLQESKVS (73 aa)).

The protein belongs to the RNA polymerase alpha chain family. In terms of assembly, in cyanobacteria the RNAP catalytic core is composed of 2 alpha, 1 beta, 1 beta', 1 gamma and 1 omega subunit. When a sigma factor is associated with the core the holoenzyme is formed, which can initiate transcription.

It catalyses the reaction RNA(n) + a ribonucleoside 5'-triphosphate = RNA(n+1) + diphosphate. Its function is as follows. DNA-dependent RNA polymerase catalyzes the transcription of DNA into RNA using the four ribonucleoside triphosphates as substrates. In Synechococcus elongatus (strain ATCC 33912 / PCC 7942 / FACHB-805) (Anacystis nidulans R2), this protein is DNA-directed RNA polymerase subunit alpha.